Consider the following 694-residue polypeptide: Potassium-transporting ATPase ATP-binding subunit (694 aa).

The next 4 membrane-spanning stretches (helical) occupy residues Val36–Ile56, Leu62–Ala82, Ile218–Ile238, and Ile249–Leu269. Catalysis depends on Asp306, which acts as the 4-aspartylphosphate intermediate. Residues Asp343, Glu347, Phe376–Ser383, and Lys394 contribute to the ATP site. Mg(2+) is bound by residues Asp530 and Asp534. 3 consecutive transmembrane segments (helical) span residues Phe600–Met620, Ala628–Leu648, and Leu666–Leu686.

Belongs to the cation transport ATPase (P-type) (TC 3.A.3) family. Type IA subfamily. The system is composed of three essential subunits: KdpA, KdpB and KdpC.

It is found in the cell inner membrane. It catalyses the reaction K(+)(out) + ATP + H2O = K(+)(in) + ADP + phosphate + H(+). In terms of biological role, part of the high-affinity ATP-driven potassium transport (or Kdp) system, which catalyzes the hydrolysis of ATP coupled with the electrogenic transport of potassium into the cytoplasm. This subunit is responsible for energy coupling to the transport system and for the release of the potassium ions to the cytoplasm. This chain is Potassium-transporting ATPase ATP-binding subunit, found in Agrobacterium fabrum (strain C58 / ATCC 33970) (Agrobacterium tumefaciens (strain C58)).